We begin with the raw amino-acid sequence, 306 residues long: Homeobox protein Hox-C13a (306 aa).

The interval serine 68 to serine 90 is disordered. Residues glycine 236–isoleucine 295 constitute a DNA-binding region (homeobox).

Belongs to the Abd-B homeobox family.

It is found in the nucleus. Its function is as follows. Sequence-specific transcription factor which is part of a developmental regulatory system that provides cells with specific positional identities on the anterior-posterior axis. The chain is Homeobox protein Hox-C13a (hoxc13a) from Takifugu rubripes (Japanese pufferfish).